Reading from the N-terminus, the 284-residue chain is Pantothenate synthetase (284 aa).

Met31–His38 contacts ATP. Catalysis depends on His38, which acts as the Proton donor. Gln62 contacts (R)-pantoate. Gln62 contacts beta-alanine. Residue Gly150–Asp153 participates in ATP binding. Gln156 contacts (R)-pantoate. ATP-binding positions include Val179 and Met187–Arg190.

This sequence belongs to the pantothenate synthetase family. As to quaternary structure, homodimer.

It is found in the cytoplasm. The enzyme catalyses (R)-pantoate + beta-alanine + ATP = (R)-pantothenate + AMP + diphosphate + H(+). Its pathway is cofactor biosynthesis; (R)-pantothenate biosynthesis; (R)-pantothenate from (R)-pantoate and beta-alanine: step 1/1. In terms of biological role, catalyzes the condensation of pantoate with beta-alanine in an ATP-dependent reaction via a pantoyl-adenylate intermediate. The protein is Pantothenate synthetase of Xanthomonas campestris pv. campestris (strain 8004).